Here is a 518-residue protein sequence, read N- to C-terminus: MTSSEIAMPGEVKADPAALMASLQLLPSPTPNLEIKYTKIFINNEWQNSESGRVFPVCNPATGEQVCEVQEADKVDIDKAVQAARLAFSLGSVWRRMDASERGRLLDKLADLVERDRATLATMESLNGGKPFLQAFYIDLQGVIKTLRYYAGWADKIHGMTIPVDGDYFTFTRHEPIGVCGQIIPWNFPLLMFTWKIAPALCCGNTVVIKPAEQTPLSALYMGALIKEAGFPPGVVNILPGYGPTAGAAIASHIGIDKIAFTGSTEVGKLIQEAAGRSNLKRVTLELGGKSPNIIFADADLDYAVEQAHQGVFFNQGQCCTAGSRIFVEESIYEEFVKRSVERAKRRIVGSPFDPTTEQGPQIDKKQYNKVLELIQSGVAEGAKLECGGKGLGRKGFFIEPTVFSNVTDDMRIAKEEIFGPVQEILRFKTMDEVIERANNSDFGLVAAVFTNDINKALMVSSAMQAGTVWINCYNALNAQSPFGGFKMSGNGREMGEFGLREYSEVKTVTVKIPQKNS.

Tyrosine 168 is subject to Phosphotyrosine. Residues 184-186 (IPW), 210-213 (KPAE), and 264-266 (STE) each bind NAD(+). Residue glutamate 286 is the Proton acceptor of the active site. Residue cysteine 320 is the Nucleophile of the active site. Phosphoserine is present on serine 351. NAD(+) is bound by residues 366 to 370 (KQYNK) and glutamate 417.

This sequence belongs to the aldehyde dehydrogenase family. In terms of assembly, homotetramer.

The protein localises to the cytoplasm. The enzyme catalyses retinal + NAD(+) + H2O = retinoate + NADH + 2 H(+). The catalysed reaction is all-trans-retinal + NAD(+) + H2O = all-trans-retinoate + NADH + 2 H(+). It carries out the reaction all-trans-13,14-dihydroretinal + NAD(+) + H2O = all-trans-13,14-dihydroretinoate + NADH + 2 H(+). It participates in cofactor metabolism; retinol metabolism. Catalyzes the NAD-dependent oxidation of aldehyde substrates, such as all-trans-retinal and all-trans-13,14-dihydroretinal, to their corresponding carboxylic acids, all-trans-retinoate and all-trans-13,14-dihydroretinoate, respectively. Retinoate signaling is critical for the transcriptional control of many genes, for instance it is crucial for initiation of meiosis in both male and female. Recognizes retinal as substrate, both in its free form and when bound to cellular retinol-binding protein. Lacks activity with benzaldehyde, acetaldehyde and octanal. Displays complete lack of activity with citral. The polypeptide is Retinal dehydrogenase 2 (Aldh1a2) (Mus musculus (Mouse)).